A 90-amino-acid polypeptide reads, in one-letter code: Molybdopterin synthase sulfur carrier subunit (90 aa).

G90 carries the 1-thioglycine; alternate modification. G90 carries the glycyl adenylate; alternate modification.

It belongs to the MoaD family. MOCS2A subfamily. In terms of assembly, heterotetramer; composed of 2 small (Mocs2A) and 2 large (Mocs2B) subunits. In terms of processing, C-terminal thiocarboxylation occurs in 2 steps, it is first acyl-adenylated (-COAMP) via the hesA/moeB/thiF part of MOCS3, then thiocarboxylated (-COSH) via the rhodanese domain of MOCS3.

The protein resides in the cytoplasm. It participates in cofactor biosynthesis; molybdopterin biosynthesis. Its function is as follows. Acts as a sulfur carrier required for molybdopterin biosynthesis. Component of the molybdopterin synthase complex that catalyzes the conversion of precursor Z into molybdopterin by mediating the incorporation of 2 sulfur atoms into precursor Z to generate a dithiolene group. In the complex, serves as sulfur donor by being thiocarboxylated (-COSH) at its C-terminus by MOCS3. After interaction with Mocs2B, the sulfur is then transferred to precursor Z to form molybdopterin. In Drosophila sechellia (Fruit fly), this protein is Molybdopterin synthase sulfur carrier subunit.